The following is a 427-amino-acid chain: UDP-N-acetyl-D-mannosamine dehydrogenase (427 aa).

Residues Tyr19, Ile20, Asp39, Arg44, Thr91, and Thr130 each coordinate NAD(+). 8 residues coordinate UDP-N-acetyl-alpha-D-mannosaminouronate: Arg155, Val156, Lys207, Asn211, Arg214, His245, Arg247, and Gly258. The active-site Proton donor/acceptor is the Lys207. The active-site Nucleophile is the Cys261. UDP-N-acetyl-alpha-D-mannosaminouronate-binding residues include Tyr318 and Lys319. Residue Arg326 coordinates NAD(+). Lys404 provides a ligand contact to UDP-N-acetyl-alpha-D-mannosaminouronate.

The protein belongs to the UDP-glucose/GDP-mannose dehydrogenase family. As to quaternary structure, homotetramer; probably dimer of dimers.

The enzyme catalyses UDP-N-acetyl-alpha-D-mannosamine + 2 NAD(+) + H2O = UDP-N-acetyl-alpha-D-mannosaminouronate + 2 NADH + 3 H(+). Its function is as follows. Catalyzes the four-electron oxidation of UDP-N-acetyl-D-mannosamine (UDP-ManNAc), reducing NAD(+) and releasing UDP-N-acetylmannosaminuronic acid (UDP-ManNAcA). Cannot use NADP instead of NAD. The polypeptide is UDP-N-acetyl-D-mannosamine dehydrogenase (wecC) (Methanococcus maripaludis (strain DSM 14266 / JCM 13030 / NBRC 101832 / S2 / LL)).